The primary structure comprises 302 residues: Taste receptor type 2 member 104 (302 aa).

At 1–7 (MLSMLES) the chain is on the extracellular side. Residues 8 to 28 (ILLSVATSEAMLGILGNIFIV) form a helical membrane-spanning segment. The Cytoplasmic portion of the chain corresponds to 29–43 (LVNCTNWVRNKKLSK). The helical transmembrane segment at 44 to 64 (INFILTGLAISRVFTIWIITL) threads the bilayer. The Extracellular portion of the chain corresponds to 65–87 (DAYTKVFFLTTLMPSNLHECISY). A helical membrane pass occupies residues 88–108 (IWVIINHLSVWFATSLSIFYF). Over 109 to 128 (LKIANFSHYIFLWLKRRADK) the chain is Cytoplasmic. A helical transmembrane segment spans residues 129-149 (VFVFLIGYLIITWLASFPLAV). At 150 to 182 (TVIKNIKVHHNNTSWLIQLEKRELLINYVFANM) the chain is on the extracellular side. Asn-160 and Asn-161 each carry an N-linked (GlcNAc...) asparagine glycan. The chain crosses the membrane as a helical span at residues 183 to 203 (GPISLFMVAVFTCFLLTISLW). The Cytoplasmic portion of the chain corresponds to 204-233 (RHRRRMQSTGSKFRDLNTEVHVKAMKVLIS). Residues 234 to 254 (FIILFILYFMGVLIETLCLFL) traverse the membrane as a helical segment. Residues 255-257 (TEN) lie on the Extracellular side of the membrane. A helical transmembrane segment spans residues 258 to 278 (ILLFIFGFTLSSTYPCCHSFI). Over 279–302 (LILTSRELKQASMRALQRLKCCET) the chain is Cytoplasmic.

It belongs to the G-protein coupled receptor T2R family.

Its subcellular location is the membrane. Putative taste receptor which may play a role in the perception of bitterness. This is Taste receptor type 2 member 104 from Rattus norvegicus (Rat).